A 177-amino-acid polypeptide reads, in one-letter code: Large ribosomal subunit protein uL6 (177 aa).

The protein belongs to the universal ribosomal protein uL6 family. Part of the 50S ribosomal subunit.

Functionally, this protein binds to the 23S rRNA, and is important in its secondary structure. It is located near the subunit interface in the base of the L7/L12 stalk, and near the tRNA binding site of the peptidyltransferase center. The protein is Large ribosomal subunit protein uL6 of Rhodopseudomonas palustris (strain BisA53).